We begin with the raw amino-acid sequence, 59 residues long: Large ribosomal subunit protein bL32 (59 aa).

Residues 1-15 (MAVPKRKTSKSKRDM) are compositionally biased toward basic residues. The tract at residues 1 to 21 (MAVPKRKTSKSKRDMRRASNS) is disordered.

The protein belongs to the bacterial ribosomal protein bL32 family.

The polypeptide is Large ribosomal subunit protein bL32 (Alkaliphilus metalliredigens (strain QYMF)).